The primary structure comprises 171 residues: Ribosome-binding factor A (171 aa).

Residues 120–132 (AALAAAAQPAGDP) are compositionally biased toward low complexity. Positions 120–171 (AALAAAAQPAGDPDPYKKPVDHTDDWDEDDEDDRDGDDAVDALDAAADVPRL) are disordered. Residues 133-142 (DPYKKPVDHT) are compositionally biased toward basic and acidic residues. Residues 143 to 160 (DDWDEDDEDDRDGDDAVD) show a composition bias toward acidic residues. Positions 161 to 171 (ALDAAADVPRL) are enriched in low complexity.

The protein belongs to the RbfA family. In terms of assembly, monomer. Binds 30S ribosomal subunits, but not 50S ribosomal subunits or 70S ribosomes.

It is found in the cytoplasm. Functionally, one of several proteins that assist in the late maturation steps of the functional core of the 30S ribosomal subunit. Associates with free 30S ribosomal subunits (but not with 30S subunits that are part of 70S ribosomes or polysomes). Required for efficient processing of 16S rRNA. May interact with the 5'-terminal helix region of 16S rRNA. The chain is Ribosome-binding factor A from Kineococcus radiotolerans (strain ATCC BAA-149 / DSM 14245 / SRS30216).